We begin with the raw amino-acid sequence, 373 residues long: Queuine tRNA-ribosyltransferase (373 aa).

The Proton acceptor role is filled by Asp-93. Substrate contacts are provided by residues Asp-93–Phe-97, Asp-147, Gln-191, and Gly-218. Positions Gly-249 to Asp-255 are RNA binding. Asp-268 (nucleophile) is an active-site residue. An RNA binding; important for wobble base 34 recognition region spans residues Thr-273 to Arg-277. Residues Cys-306, Cys-308, Cys-311, and His-337 each contribute to the Zn(2+) site.

Belongs to the queuine tRNA-ribosyltransferase family. Homodimer. Within each dimer, one monomer is responsible for RNA recognition and catalysis, while the other monomer binds to the replacement base PreQ1. The cofactor is Zn(2+).

It catalyses the reaction 7-aminomethyl-7-carbaguanine + guanosine(34) in tRNA = 7-aminomethyl-7-carbaguanosine(34) in tRNA + guanine. Its pathway is tRNA modification; tRNA-queuosine biosynthesis. Its function is as follows. Catalyzes the base-exchange of a guanine (G) residue with the queuine precursor 7-aminomethyl-7-deazaguanine (PreQ1) at position 34 (anticodon wobble position) in tRNAs with GU(N) anticodons (tRNA-Asp, -Asn, -His and -Tyr). Catalysis occurs through a double-displacement mechanism. The nucleophile active site attacks the C1' of nucleotide 34 to detach the guanine base from the RNA, forming a covalent enzyme-RNA intermediate. The proton acceptor active site deprotonates the incoming PreQ1, allowing a nucleophilic attack on the C1' of the ribose to form the product. After dissociation, two additional enzymatic reactions on the tRNA convert PreQ1 to queuine (Q), resulting in the hypermodified nucleoside queuosine (7-(((4,5-cis-dihydroxy-2-cyclopenten-1-yl)amino)methyl)-7-deazaguanosine). The sequence is that of Queuine tRNA-ribosyltransferase from Solidesulfovibrio magneticus (strain ATCC 700980 / DSM 13731 / RS-1) (Desulfovibrio magneticus).